We begin with the raw amino-acid sequence, 369 residues long: MESYDAIVIGGGPAGAASALSLLTHHNKRVLLLERGDFSQARIGEQVSHSIFDFLAYLDLPVSEFGESCFSPNYGKTSLWGSSIESHHLSMFATQGATYQLDRAAFDETLLMAFVERGGTVIPRCKQMKIEQSDSVWQVQFVHPEQGEQTVCCDYLVDASGRQSKLSAMLGVEPVMDDQLVGVGAFIRNPDNAFEQHQRIESCEYGWWYMAGLSSELAVVTCFTDMDIMREMRLNKASVWNQYLAETSAIADCVKGSETTHPKLWVKQAHSQYCTSELPDRFIAVGDAALSFDPVSSMGIGFAMTSACHSTRALVSDSKDAVLQYQQDMARIYQEYHVTKTRIYQREKRWPNQLFWQRRHAFSALQHAS.

Residues 10 to 14 and R103 contribute to the FAD site; that span reads GGGPA.

FAD is required as a cofactor.

It localises to the cytoplasm. In terms of biological role, is required for lysine-epsilon oxidase (LOD) activity in M.mediterranea. May be involved in the generation of the quinonic cofactor of LodA, leading to the active form of LodA containing a tyrosine-derived quinone cofactor. This Marinomonas mediterranea (strain ATCC 700492 / JCM 21426 / NBRC 103028 / MMB-1) protein is Putative FAD-dependent oxidoreductase LodB (lodB).